The sequence spans 513 residues: Na(+)/H(+) antiporter NhaB (513 aa).

A run of 11 helical transmembrane segments spans residues 23–43 (LALI…PFVA), 52–72 (IFTL…LLAI), 97–117 (LLLM…LFIF), 144–164 (FLDA…FYGI), 202–222 (LMMH…VGEP), 238–258 (FFLR…LTCL), 303–323 (AIIG…VGLI), 348–368 (TESL…AVII), 391–411 (LFYI…VGTI), 447–467 (ATPN…APLI), and 475–495 (VWMA…CVEF).

Belongs to the NhaB Na(+)/H(+) (TC 2.A.34) antiporter family.

It is found in the cell inner membrane. It carries out the reaction 2 Na(+)(in) + 3 H(+)(out) = 2 Na(+)(out) + 3 H(+)(in). Na(+)/H(+) antiporter that extrudes sodium in exchange for external protons. In Escherichia coli (strain SMS-3-5 / SECEC), this protein is Na(+)/H(+) antiporter NhaB.